We begin with the raw amino-acid sequence, 84 residues long: MAQTQSPLQWLATTVIRGYQILISPLLGPRCRFNPTCSYYAIEAIKTHGTVKGSWFAMKRILKCHPLHPGGSDPVPPKNDRCNK.

It belongs to the UPF0161 family.

The protein localises to the cell inner membrane. Could be involved in insertion of integral membrane proteins into the membrane. This Shewanella frigidimarina (strain NCIMB 400) protein is Putative membrane protein insertion efficiency factor.